The following is a 91-amino-acid chain: Small ribosomal subunit protein uS19 (91 aa).

The protein belongs to the universal ribosomal protein uS19 family.

Its function is as follows. Protein S19 forms a complex with S13 that binds strongly to the 16S ribosomal RNA. This Azotobacter vinelandii (strain DJ / ATCC BAA-1303) protein is Small ribosomal subunit protein uS19.